The primary structure comprises 94 residues: Large ribosomal subunit protein bL25 (94 aa).

Belongs to the bacterial ribosomal protein bL25 family. In terms of assembly, part of the 50S ribosomal subunit; part of the 5S rRNA/L5/L18/L25 subcomplex. Contacts the 5S rRNA. Binds to the 5S rRNA independently of L5 and L18.

Functionally, this is one of the proteins that binds to the 5S RNA in the ribosome where it forms part of the central protuberance. This chain is Large ribosomal subunit protein bL25, found in Pectobacterium carotovorum subsp. carotovorum (strain PC1).